The primary structure comprises 300 residues: Ribonuclease HIII (300 aa).

Residues 83–300 form the RNase H type-2 domain; sequence IPIIGSDEVG…THKAQALLTK (218 aa). The a divalent metal cation site is built by Asp-89, Glu-90, and Asp-194.

The protein belongs to the RNase HII family. RnhC subfamily. The cofactor is Mn(2+). Requires Mg(2+) as cofactor.

It localises to the cytoplasm. The enzyme catalyses Endonucleolytic cleavage to 5'-phosphomonoester.. In terms of biological role, endonuclease that specifically degrades the RNA of RNA-DNA hybrids. The sequence is that of Ribonuclease HIII from Streptococcus pyogenes serotype M28 (strain MGAS6180).